A 131-amino-acid chain; its full sequence is Small ribosomal subunit protein uS8 (131 aa).

This sequence belongs to the universal ribosomal protein uS8 family. As to quaternary structure, part of the 30S ribosomal subunit. Contacts proteins S5 and S12.

Its function is as follows. One of the primary rRNA binding proteins, it binds directly to 16S rRNA central domain where it helps coordinate assembly of the platform of the 30S subunit. The sequence is that of Small ribosomal subunit protein uS8 from Campylobacter lari (strain RM2100 / D67 / ATCC BAA-1060).